The primary structure comprises 229 residues: 2-C-methyl-D-erythritol 4-phosphate cytidylyltransferase (229 aa).

The protein belongs to the IspD/TarI cytidylyltransferase family. IspD subfamily.

The enzyme catalyses 2-C-methyl-D-erythritol 4-phosphate + CTP + H(+) = 4-CDP-2-C-methyl-D-erythritol + diphosphate. The protein operates within isoprenoid biosynthesis; isopentenyl diphosphate biosynthesis via DXP pathway; isopentenyl diphosphate from 1-deoxy-D-xylulose 5-phosphate: step 2/6. Catalyzes the formation of 4-diphosphocytidyl-2-C-methyl-D-erythritol from CTP and 2-C-methyl-D-erythritol 4-phosphate (MEP). The sequence is that of 2-C-methyl-D-erythritol 4-phosphate cytidylyltransferase from Clostridium botulinum (strain 657 / Type Ba4).